A 310-amino-acid polypeptide reads, in one-letter code: HPr kinase/phosphorylase (310 aa).

Active-site residues include His138 and Lys159. 153-160 (GDSGIGKS) contacts ATP. Ser160 serves as a coordination point for Mg(2+). Residue Asp177 is the Proton acceptor; for phosphorylation activity. Proton donor; for dephosphorylation activity of the active site. Positions 201-210 (LEIRGVGIID) are important for the catalytic mechanism of both phosphorylation and dephosphorylation. Glu202 is a Mg(2+) binding site. Arg243 is an active-site residue. An important for the catalytic mechanism of dephosphorylation region spans residues 264 to 269 (PVKTGR).

This sequence belongs to the HPrK/P family. As to quaternary structure, homohexamer. It depends on Mg(2+) as a cofactor.

It catalyses the reaction [HPr protein]-L-serine + ATP = [HPr protein]-O-phospho-L-serine + ADP + H(+). The catalysed reaction is [HPr protein]-O-phospho-L-serine + phosphate + H(+) = [HPr protein]-L-serine + diphosphate. Functionally, catalyzes the ATP- as well as the pyrophosphate-dependent phosphorylation of a specific serine residue in HPr, a phosphocarrier protein of the phosphoenolpyruvate-dependent sugar phosphotransferase system (PTS). HprK/P also catalyzes the pyrophosphate-producing, inorganic phosphate-dependent dephosphorylation (phosphorolysis) of seryl-phosphorylated HPr (P-Ser-HPr). The two antagonistic activities of HprK/P are regulated by several intracellular metabolites, which change their concentration in response to the absence or presence of rapidly metabolisable carbon sources (glucose, fructose, etc.) in the growth medium. Therefore, by controlling the phosphorylation state of HPr, HPrK/P is a sensor enzyme that plays a major role in the regulation of carbon metabolism and sugar transport: it mediates carbon catabolite repression (CCR), and regulates PTS-catalyzed carbohydrate uptake and inducer exclusion. The polypeptide is HPr kinase/phosphorylase (Streptococcus uberis (strain ATCC BAA-854 / 0140J)).